A 173-amino-acid polypeptide reads, in one-letter code: Large ribosomal subunit protein bL9 (173 aa).

The disordered stretch occupies residues 151-173 (YDDTPDRTETEESTKELQEEHAE).

The protein belongs to the bacterial ribosomal protein bL9 family.

Binds to the 23S rRNA. This chain is Large ribosomal subunit protein bL9, found in Lawsonia intracellularis (strain PHE/MN1-00).